We begin with the raw amino-acid sequence, 84 residues long: Cell division topological specificity factor (84 aa).

The protein belongs to the MinE family.

Its function is as follows. Prevents the cell division inhibition by proteins MinC and MinD at internal division sites while permitting inhibition at polar sites. This ensures cell division at the proper site by restricting the formation of a division septum at the midpoint of the long axis of the cell. This Pseudomonas putida (strain W619) protein is Cell division topological specificity factor.